Reading from the N-terminus, the 340-residue chain is Holliday junction branch migration complex subunit RuvB (340 aa).

Positions 1-181 are large ATPase domain (RuvB-L); that stretch reads MDRIVEIEKA…FGMQFRLNFY (181 aa). ATP-binding positions include leucine 20, arginine 21, glycine 62, lysine 65, threonine 66, threonine 67, 128 to 130, arginine 171, tyrosine 181, and arginine 218; that span reads EDF. Position 66 (threonine 66) interacts with Mg(2+). Residues 182-252 are small ATPAse domain (RuvB-S); that stretch reads TSDELAKIVQ…RAKSSLDALG (71 aa). The head domain (RuvB-H) stretch occupies residues 255–340; it reads DLGFDEMDLK…TQKGLFDEDQ (86 aa). Positions 309 and 314 each coordinate DNA.

The protein belongs to the RuvB family. Homohexamer. Forms an RuvA(8)-RuvB(12)-Holliday junction (HJ) complex. HJ DNA is sandwiched between 2 RuvA tetramers; dsDNA enters through RuvA and exits via RuvB. An RuvB hexamer assembles on each DNA strand where it exits the tetramer. Each RuvB hexamer is contacted by two RuvA subunits (via domain III) on 2 adjacent RuvB subunits; this complex drives branch migration. In the full resolvosome a probable DNA-RuvA(4)-RuvB(12)-RuvC(2) complex forms which resolves the HJ.

It localises to the cytoplasm. It carries out the reaction ATP + H2O = ADP + phosphate + H(+). Functionally, the RuvA-RuvB-RuvC complex processes Holliday junction (HJ) DNA during genetic recombination and DNA repair, while the RuvA-RuvB complex plays an important role in the rescue of blocked DNA replication forks via replication fork reversal (RFR). RuvA specifically binds to HJ cruciform DNA, conferring on it an open structure. The RuvB hexamer acts as an ATP-dependent pump, pulling dsDNA into and through the RuvAB complex. RuvB forms 2 homohexamers on either side of HJ DNA bound by 1 or 2 RuvA tetramers; 4 subunits per hexamer contact DNA at a time. Coordinated motions by a converter formed by DNA-disengaged RuvB subunits stimulates ATP hydrolysis and nucleotide exchange. Immobilization of the converter enables RuvB to convert the ATP-contained energy into a lever motion, pulling 2 nucleotides of DNA out of the RuvA tetramer per ATP hydrolyzed, thus driving DNA branch migration. The RuvB motors rotate together with the DNA substrate, which together with the progressing nucleotide cycle form the mechanistic basis for DNA recombination by continuous HJ branch migration. Branch migration allows RuvC to scan DNA until it finds its consensus sequence, where it cleaves and resolves cruciform DNA. This is Holliday junction branch migration complex subunit RuvB from Campylobacter hominis (strain ATCC BAA-381 / DSM 21671 / CCUG 45161 / LMG 19568 / NCTC 13146 / CH001A).